A 280-amino-acid polypeptide reads, in one-letter code: Pantothenate synthetase (280 aa).

ATP is bound at residue methionine 30–histidine 37. The Proton donor role is filled by histidine 37. Glutamine 61 lines the (R)-pantoate pocket. Glutamine 61 serves as a coordination point for beta-alanine. Glycine 147–aspartate 150 lines the ATP pocket. (R)-pantoate is bound at residue glutamine 153. Residues valine 176 and methionine 184 to arginine 187 each bind ATP.

It belongs to the pantothenate synthetase family. As to quaternary structure, homodimer.

Its subcellular location is the cytoplasm. It carries out the reaction (R)-pantoate + beta-alanine + ATP = (R)-pantothenate + AMP + diphosphate + H(+). Its pathway is cofactor biosynthesis; (R)-pantothenate biosynthesis; (R)-pantothenate from (R)-pantoate and beta-alanine: step 1/1. Its function is as follows. Catalyzes the condensation of pantoate with beta-alanine in an ATP-dependent reaction via a pantoyl-adenylate intermediate. In Thermosipho melanesiensis (strain DSM 12029 / CIP 104789 / BI429), this protein is Pantothenate synthetase.